We begin with the raw amino-acid sequence, 137 residues long: Small ribosomal subunit protein uS9c (137 aa).

The protein belongs to the universal ribosomal protein uS9 family.

Its subcellular location is the plastid. The protein resides in the chloroplast. The polypeptide is Small ribosomal subunit protein uS9c (rps9) (Gracilaria tenuistipitata var. liui (Red alga)).